Consider the following 202-residue polypeptide: Probable septum site-determining protein MinC (202 aa).

Belongs to the MinC family. Interacts with MinD and FtsZ.

Its function is as follows. Cell division inhibitor that blocks the formation of polar Z ring septums. Rapidly oscillates between the poles of the cell to destabilize FtsZ filaments that have formed before they mature into polar Z rings. Prevents FtsZ polymerization. In Sulfurihydrogenibium sp. (strain YO3AOP1), this protein is Probable septum site-determining protein MinC.